Consider the following 957-residue polypeptide: Glycine dehydrogenase (decarboxylating) (957 aa).

An N6-(pyridoxal phosphate)lysine modification is found at Lys-708.

Belongs to the GcvP family. The glycine cleavage system is composed of four proteins: P, T, L and H. Pyridoxal 5'-phosphate is required as a cofactor.

The enzyme catalyses N(6)-[(R)-lipoyl]-L-lysyl-[glycine-cleavage complex H protein] + glycine + H(+) = N(6)-[(R)-S(8)-aminomethyldihydrolipoyl]-L-lysyl-[glycine-cleavage complex H protein] + CO2. The glycine cleavage system catalyzes the degradation of glycine. The P protein binds the alpha-amino group of glycine through its pyridoxal phosphate cofactor; CO(2) is released and the remaining methylamine moiety is then transferred to the lipoamide cofactor of the H protein. This Escherichia coli O8 (strain IAI1) protein is Glycine dehydrogenase (decarboxylating).